The primary structure comprises 315 residues: Ornithine carbamoyltransferase (315 aa).

Residues 57–60 (STRT), Q84, R108, and 135–138 (HPCQ) contribute to the carbamoyl phosphate site. L-ornithine-binding positions include N166, D230, and 234 to 235 (SM). Carbamoyl phosphate contacts are provided by residues 270 to 271 (CL) and R298.

Belongs to the aspartate/ornithine carbamoyltransferase superfamily. OTCase family.

It localises to the cytoplasm. The enzyme catalyses carbamoyl phosphate + L-ornithine = L-citrulline + phosphate + H(+). It participates in amino-acid biosynthesis; L-arginine biosynthesis; L-arginine from L-ornithine and carbamoyl phosphate: step 1/3. Reversibly catalyzes the transfer of the carbamoyl group from carbamoyl phosphate (CP) to the N(epsilon) atom of ornithine (ORN) to produce L-citrulline. The sequence is that of Ornithine carbamoyltransferase from Thermococcus kodakarensis (strain ATCC BAA-918 / JCM 12380 / KOD1) (Pyrococcus kodakaraensis (strain KOD1)).